We begin with the raw amino-acid sequence, 71 residues long: Small ribosomal subunit protein bS21 (71 aa).

The segment covering 34 to 44 has biased composition (basic and acidic residues); it reads RREHYEKPTSE. The segment at 34–71 is disordered; sequence RREHYEKPTSERKRKKAAAVKRHAKKLSRDNARRTRLY. A compositionally biased stretch (basic residues) spans 45–59; it reads RKRKKAAAVKRHAKK. Positions 60-71 are enriched in basic and acidic residues; sequence LSRDNARRTRLY.

The protein belongs to the bacterial ribosomal protein bS21 family.

This chain is Small ribosomal subunit protein bS21, found in Idiomarina loihiensis (strain ATCC BAA-735 / DSM 15497 / L2-TR).